Here is a 792-residue protein sequence, read N- to C-terminus: Endonuclease MutS2 (792 aa).

334-341 is an ATP binding site; the sequence is GPNTGGKT. A Smr domain is found at 717–792; sequence INLIGKTTDE…DAGVTIATFK (76 aa).

Belongs to the DNA mismatch repair MutS family. MutS2 subfamily. As to quaternary structure, homodimer. Binds to stalled ribosomes, contacting rRNA.

Its function is as follows. Endonuclease that is involved in the suppression of homologous recombination and thus may have a key role in the control of bacterial genetic diversity. Functionally, acts as a ribosome collision sensor, splitting the ribosome into its 2 subunits. Detects stalled/collided 70S ribosomes which it binds and splits by an ATP-hydrolysis driven conformational change. Acts upstream of the ribosome quality control system (RQC), a ribosome-associated complex that mediates the extraction of incompletely synthesized nascent chains from stalled ribosomes and their subsequent degradation. Probably generates substrates for RQC. The polypeptide is Endonuclease MutS2 (Agathobacter rectalis (strain ATCC 33656 / DSM 3377 / JCM 17463 / KCTC 5835 / VPI 0990) (Eubacterium rectale)).